Here is a 202-residue protein sequence, read N- to C-terminus: Orotate phosphoribosyltransferase (202 aa).

113–121 (EDIITTGGS) contacts 5-phospho-alpha-D-ribose 1-diphosphate. Orotate is bound by residues Thr-117 and Arg-145.

The protein belongs to the purine/pyrimidine phosphoribosyltransferase family. PyrE subfamily. In terms of assembly, homodimer. Requires Mg(2+) as cofactor.

The catalysed reaction is orotidine 5'-phosphate + diphosphate = orotate + 5-phospho-alpha-D-ribose 1-diphosphate. The protein operates within pyrimidine metabolism; UMP biosynthesis via de novo pathway; UMP from orotate: step 1/2. Catalyzes the transfer of a ribosyl phosphate group from 5-phosphoribose 1-diphosphate to orotate, leading to the formation of orotidine monophosphate (OMP). This Sulfurimonas denitrificans (strain ATCC 33889 / DSM 1251) (Thiomicrospira denitrificans (strain ATCC 33889 / DSM 1251)) protein is Orotate phosphoribosyltransferase.